The primary structure comprises 394 residues: Ornithine aminotransferase 1 (394 aa).

Residue Lys252 is modified to N6-(pyridoxal phosphate)lysine.

It belongs to the class-III pyridoxal-phosphate-dependent aminotransferase family. OAT subfamily. The cofactor is pyridoxal 5'-phosphate.

It localises to the cytoplasm. It catalyses the reaction a 2-oxocarboxylate + L-ornithine = L-glutamate 5-semialdehyde + an L-alpha-amino acid. Its pathway is amino-acid biosynthesis; L-proline biosynthesis; L-glutamate 5-semialdehyde from L-ornithine: step 1/1. Functionally, catalyzes the interconversion of ornithine to glutamate semialdehyde. This Staphylococcus aureus (strain COL) protein is Ornithine aminotransferase 1.